Consider the following 437-residue polypeptide: Transcription factor AP-2-alpha (437 aa).

A Glycyl lysine isopeptide (Lys-Gly) (interchain with G-Cter in SUMO); alternate cross-link involves residue lysine 10. Lysine 10 participates in a covalent cross-link: Glycyl lysine isopeptide (Lys-Gly) (interchain with G-Cter in SUMO2); alternate. The disordered stretch occupies residues 14-107 (CEDRHDGASN…GQRQSQESGL (94 aa)). Positions 57-62 (YFPPPY) match the PPxY motif motif. Low complexity-rich tracts occupy residues 65 to 74 (IYPQSQDPYS) and 88 to 101 (QPQP…GQRQ). Glycyl lysine isopeptide (Lys-Gly) (interchain with G-Cter in SUMO2) cross-links involve residues lysine 177 and lysine 184. At serine 239 the chain carries Phosphoserine; by PKA. The interval 280–410 (RRKAANVTLL…YLTEALKAMD (131 aa)) is H-S-H (helix-span-helix), dimerization. Positions 414–427 (LSNNPNSHTDNNAK) are enriched in polar residues. A disordered region spans residues 414 to 437 (LSNNPNSHTDNNAKSSDKEEKHRK). Residues 428 to 437 (SSDKEEKHRK) show a composition bias toward basic and acidic residues.

The protein belongs to the AP-2 family. As to quaternary structure, binds DNA as a dimer. Can form homodimers or heterodimers with other AP-2 family members. Interacts with WWOX. Interacts with CITED4. Interacts with UBE2I. Interacts with RALBP1 in a complex also containing EPN1 and NUMB during interphase and mitosis. Interacts with KCTD1; this interaction represses transcription activation. Interacts (via C-terminus) with CITED2 (via C-terminus); the interaction stimulates TFAP2A-transcriptional activation. Interacts (via N-terminus) with EP300 (via N-terminus); the interaction requires CITED2. Interacts with KCTD15; this interaction inhibits TFAP2A transcriptional activation. Sumoylated on Lys-10; which inhibits transcriptional activity.

Its subcellular location is the nucleus. In terms of biological role, sequence-specific DNA-binding protein that interacts with inducible viral and cellular enhancer elements to regulate transcription of selected genes. AP-2 factors bind to the consensus sequence 5'-GCCNNNGGC-3' and activate genes involved in a large spectrum of important biological functions including proper eye, face, body wall, limb and neural tube development. They also suppress a number of genes including MCAM/MUC18, C/EBP alpha and MYC. AP-2-alpha is the only AP-2 protein required for early morphogenesis of the lens vesicle. Together with the CITED2 coactivator, stimulates the PITX2 P1 promoter transcription activation. Associates with chromatin to the PITX2 P1 promoter region. The polypeptide is Transcription factor AP-2-alpha (TFAP2A) (Bos taurus (Bovine)).